Consider the following 172-residue polypeptide: MRTLVMVACAVSLAACSSPPKPPTVSGRHRIPINSPAAQEELRLQVFPQEPTAQATMWPARPPKQTVNVYFPQDVTVFRPTSAQINQLHTLLWPVPKHINVRGLTDNNCPPPGDTQVARVRALAIYNWLINQGVPASRITISYAPVKDYASNAPLSPGRVLNRRVDIEILRK.

A signal peptide spans 1 to 15 (MRTLVMVACAVSLAA). A lipid anchor (N-palmitoyl cysteine) is attached at cysteine 16. The S-diacylglycerol cysteine moiety is linked to residue cysteine 16. The 115-residue stretch at 58–172 (WPARPPKQTV…RRVDIEILRK (115 aa)) folds into the OmpA-like domain.

The protein resides in the cell outer membrane. In terms of biological role, the virB operon is essential for intracellular survival and is not involved in the invasion process. Constitutes a major determinant of virulence in mice. This protein is essential for pathogenesis in mice but is not required for intracellular survival. This Brucella abortus (strain 2308) protein is Type IV secretion system putative outer membrane lipoprotein BAB2_0057.